The sequence spans 606 residues: Elongation factor 4 (606 aa).

Residues Lys-10–Gln-192 enclose the tr-type G domain. Residues Asp-22–Thr-27 and Asn-139–Asp-142 each bind GTP.

Belongs to the TRAFAC class translation factor GTPase superfamily. Classic translation factor GTPase family. LepA subfamily.

It is found in the cell inner membrane. It carries out the reaction GTP + H2O = GDP + phosphate + H(+). Its function is as follows. Required for accurate and efficient protein synthesis under certain stress conditions. May act as a fidelity factor of the translation reaction, by catalyzing a one-codon backward translocation of tRNAs on improperly translocated ribosomes. Back-translocation proceeds from a post-translocation (POST) complex to a pre-translocation (PRE) complex, thus giving elongation factor G a second chance to translocate the tRNAs correctly. Binds to ribosomes in a GTP-dependent manner. The protein is Elongation factor 4 of Nitrosococcus oceani (strain ATCC 19707 / BCRC 17464 / JCM 30415 / NCIMB 11848 / C-107).